The sequence spans 861 residues: Nuclear cap-binding protein complex subunit 1 (861 aa).

Residues 22 to 30 carry the Nuclear localization signal motif; sequence RMPKRQRIP. The MIF4G domain maps to 36–264; that stretch reads CKEMMPDIRT…LVRVVLPNVK (229 aa).

The protein belongs to the NCBP1 family. Component of the nuclear cap-binding complex (CBC), a heterodimer composed of STO1/CBC1 and CBC2 that interacts with capped RNAs. The complex interacts strongly with the importin subunit alpha SRP1. The SRP1-CBC trimer also binds to capped RNAs, but formation of the importin alpha/beta heterodimer upon binding of KAP95 to SRP1 in the cytoplasm causes dissociation of CBC from the RNA. The CBC complex is part of the commitment complex 1 (CC1), binding to the cap of pre-mRNA and interacting with U1 snRNP subunits MUD2 and SNU56. The CBC complex is part of the NRD1 complex, composed of CBC2, NAB1, NRD1, SEN1 and STO1/CBC2. The CBC complex also interacts with NPL3 and eIF4G (TIF4631 and TIF4632).

The protein localises to the nucleus. The protein resides in the cytoplasm. It localises to the perinuclear region. Its function is as follows. Component of the CBC complex, which binds co-transcriptionally to the 5'-cap of pre-mRNAs and is involved in maturation, export and degradation of nuclear mRNAs. The CBC complex is required for efficient pre-mRNA splicing through efficient commitment complex and spliceosome formation. Together with NPL3, the CBC complex is required for export of mRNAs out of the nucleus. The CBC complex is also involved in nuclear mRNA degradation, probably by directing the mRNAs to the sites of degradation. Affects replication of the positive-strand RNA virus BMV. The protein is Nuclear cap-binding protein complex subunit 1 (STO1) of Saccharomyces cerevisiae (strain ATCC 204508 / S288c) (Baker's yeast).